The sequence spans 2151 residues: Protein PRR14L (2151 aa).

2 stretches are compositionally biased toward basic and acidic residues: residues 112 to 123 and 134 to 154; these read KRSESMEPKVFR and EPSE…EEKT. Disordered stretches follow at residues 112–160, 206–225, and 314–350; these read KRSE…SQED, GTKT…KDLS, and QLHG…SDLS. Ser-157 bears the Phosphoserine mark. Residues 322–350 show a composition bias toward polar residues; sequence QPSSTHDSPTATSPLKENSEVSCFTSDLS. Ser-582 and Ser-945 each carry phosphoserine. The disordered stretch occupies residues 974 to 1017; the sequence is SNQNRPDECKSEGQSAKEMLSSDQRETVTEPHGEVNHNQKDLLV. Over residues 996-1013 the composition is skewed to basic and acidic residues; that stretch reads DQRETVTEPHGEVNHNQK. Position 1029 is a phosphoserine (Ser-1029). Residues 1091–1103 are compositionally biased toward basic and acidic residues; the sequence is DSRSTLSRRELDA. 4 disordered regions span residues 1091–1115, 1178–1226, 1782–1802, and 1986–2012; these read DSRS…DSDF, DSHY…SCHD, TGVH…PLQD, and AACP…KVSQ. Polar residues predominate over residues 1178–1187; the sequence is DSHYGQQDKG. Positions 1188–1201 are enriched in basic and acidic residues; it reads TSLRETQEMTEGSR.

This chain is Protein PRR14L (PRR14L), found in Homo sapiens (Human).